An 800-amino-acid chain; its full sequence is Structural protein ORF800 (800 aa).

4 coiled-coil regions span residues 98 to 130 (AENIVEYLKEEEKVKELLNKLNDALSQADYNLA), 447 to 475 (LLAEANNLIDQANAVITQVNNMMNNANNL), 514 to 567 (AINQ…ANNL), and 606 to 633 (AINQDSVNQVEENIQNIQNTITEFNLLA). Positions 759 to 800 (AESIAESESETTESENNETTESTANSEGEKQEGEHGARLIRV) are disordered. The span at 761-776 (SIAESESETTESENNE) shows a compositional bias: acidic residues. Basic and acidic residues predominate over residues 785 to 800 (EGEKQEGEHGARLIRV).

Its subcellular location is the virion. The sequence is that of Structural protein ORF800 from Acidianus convivator (ATV).